A 220-amino-acid polypeptide reads, in one-letter code: Cysteine-rich venom protein (220 aa).

An SCP domain is found at Asp-20–Tyr-147. 8 disulfides stabilise this stretch: Cys-56–Cys-134, Cys-73–Cys-148, Cys-129–Cys-145, Cys-167–Cys-174, Cys-170–Cys-179, Cys-183–Cys-215, Cys-192–Cys-209, and Cys-200–Cys-213. The 33-residue stretch at Cys-183 to Cys-215 folds into the ShKT domain.

In terms of tissue distribution, expressed by the venom gland.

Its subcellular location is the secreted. Its function is as follows. Blocks contraction of smooth muscle elicited by high potassium-induced depolarization, but does not block caffeine-stimulated contraction. May target voltage-gated calcium channels in smooth muscle. This chain is Cysteine-rich venom protein, found in Echis coloratus (Carpet viper).